We begin with the raw amino-acid sequence, 425 residues long: Enolase (425 aa).

Q161 serves as a coordination point for (2R)-2-phosphoglycerate. The active-site Proton donor is the E203. 3 residues coordinate Mg(2+): D240, E283, and D310. The (2R)-2-phosphoglycerate site is built by K335, R364, S365, and K386. Residue K335 is the Proton acceptor of the active site.

The protein belongs to the enolase family. In terms of assembly, component of the RNA degradosome, a multiprotein complex involved in RNA processing and mRNA degradation. Mg(2+) is required as a cofactor.

It localises to the cytoplasm. Its subcellular location is the secreted. It is found in the cell surface. The catalysed reaction is (2R)-2-phosphoglycerate = phosphoenolpyruvate + H2O. Its pathway is carbohydrate degradation; glycolysis; pyruvate from D-glyceraldehyde 3-phosphate: step 4/5. In terms of biological role, catalyzes the reversible conversion of 2-phosphoglycerate (2-PG) into phosphoenolpyruvate (PEP). It is essential for the degradation of carbohydrates via glycolysis. The sequence is that of Enolase from Ruthia magnifica subsp. Calyptogena magnifica.